The chain runs to 919 residues: TRPM8 channel-associated factor 2 (919 aa).

Residues 542–841 (DCWVSTGLYL…TYLQLQEAFG (300 aa)) enclose the Peptidase M60 domain.

Belongs to the TCAF family. As to quaternary structure, isoform 2 interacts with TRPM8 (via N-terminus and C-terminus domains); the interaction inhibits TRPM8 channel activity. Interacts with TRPV6. Isoform 2 is expressed in the prostate and in cancerous prostate samples.

It is found in the cell membrane. Its function is as follows. Negatively regulates the plasma membrane cation channel TRPM8 activity. Involved in the recruitment of TRPM8 to the cell surface. Promotes prostate cancer cell migration stimulation in a TRPM8-dependent manner. The polypeptide is TRPM8 channel-associated factor 2 (Homo sapiens (Human)).